The following is a 398-amino-acid chain: GTPase Obg (398 aa).

Positions 1–159 (MKFVDEAPIS…RNLKLELKVL (159 aa)) constitute an Obg domain. The disordered stretch occupies residues 128–148 (TRFKSSTNRVPRKTTPGTEGE). In terms of domain architecture, OBG-type G spans 160–333 (ADVGMLGLPN…LSGKIMDHLE (174 aa)). GTP-binding positions include 166 to 173 (GLPNAGKS), 191 to 195 (FTTLV), 213 to 216 (DIPG), 283 to 286 (NKID), and 314 to 316 (SAL). The Mg(2+) site is built by serine 173 and threonine 193.

This sequence belongs to the TRAFAC class OBG-HflX-like GTPase superfamily. OBG GTPase family. In terms of assembly, monomer. Mg(2+) serves as cofactor.

It localises to the cytoplasm. Its function is as follows. An essential GTPase which binds GTP, GDP and possibly (p)ppGpp with moderate affinity, with high nucleotide exchange rates and a fairly low GTP hydrolysis rate. Plays a role in control of the cell cycle, stress response, ribosome biogenesis and in those bacteria that undergo differentiation, in morphogenesis control. The protein is GTPase Obg of Cellvibrio japonicus (strain Ueda107) (Pseudomonas fluorescens subsp. cellulosa).